A 137-amino-acid polypeptide reads, in one-letter code: DNA-binding protein H-NS (137 aa).

The DNA-binding element occupies 112-117 (QGRTPA).

This sequence belongs to the histone-like protein H-NS family. As to quaternary structure, homodimer that oligomerizes on DNA into higher-order complexes that form bridges between disparate regions of DNA compacting it. Interacts with Hha, YdgT and StpA.

The protein localises to the cytoplasm. It localises to the nucleoid. Functionally, a DNA-binding protein implicated in transcriptional repression and chromosome organization and compaction. Binds nucleation sites in AT-rich DNA and bridges them, forming higher-order nucleoprotein complexes and condensing the chromosome. As many horizontally transferred genes are AT-rich, it plays a central role in silencing foreign genes. A subset of genes are repressed by H-NS in association with other proteins. The sequence is that of DNA-binding protein H-NS (hns) from Salmonella paratyphi A (strain ATCC 9150 / SARB42).